A 471-amino-acid polypeptide reads, in one-letter code: 6-phosphofructo-2-kinase/fructose-2,6-bisphosphatase 1 (471 aa).

S2 is subject to N-acetylserine. The segment at 2–250 is 6-phosphofructo-2-kinase; that stretch reads SREMGELTQT…AYYLMNIHVT (249 aa). S33 is modified (phosphoserine; by PKA). 49–57 is an ATP binding site; sequence GLPARGKTY. Beta-D-fructose 6-phosphate-binding residues include R82 and R105. D131 is a catalytic residue. T133 and R139 together coordinate beta-D-fructose 6-phosphate. S141 is modified (phosphoserine). C161 is an active-site residue. 170-175 is a binding site for ATP; it reads NIKQVK. 3 residues coordinate beta-D-fructose 6-phosphate: K175, R196, and Y200. Residues 251-471 form a fructose-2,6-bisphosphatase region; that stretch reads PRSIYLCRHG…EALDTVPAHY (221 aa). R258 is a beta-D-fructose 2,6-bisphosphate binding site. Catalysis depends on H259, which acts as the Tele-phosphohistidine intermediate. Beta-D-fructose 2,6-bisphosphate is bound by residues N265, G271, and R308. E328 serves as the catalytic Proton donor/acceptor. Y339, R353, K357, Y368, Q394, and R398 together coordinate beta-D-fructose 2,6-bisphosphate. ATP is bound at residue 350-353; it reads FALR. ATP contacts are provided by residues 394 to 398 and Y430; that span reads QAVMR.

This sequence in the C-terminal section; belongs to the phosphoglycerate mutase family. As to quaternary structure, homodimer. In terms of tissue distribution, liver.

It catalyses the reaction beta-D-fructose 2,6-bisphosphate + H2O = beta-D-fructose 6-phosphate + phosphate. The catalysed reaction is beta-D-fructose 6-phosphate + ATP = beta-D-fructose 2,6-bisphosphate + ADP + H(+). Its activity is regulated as follows. Phosphorylation at Ser-33 inhibits the kinase and activates the bisphosphatase. Its function is as follows. Synthesis and degradation of fructose 2,6-bisphosphate. In Rattus norvegicus (Rat), this protein is 6-phosphofructo-2-kinase/fructose-2,6-bisphosphatase 1.